Consider the following 125-residue polypeptide: Small ribosomal subunit protein uS13 (125 aa).

The tract at residues 90 to 125 (QRHRKGLPVRGQRTKTNARTRKGPKRTVAGKKKATK) is disordered.

This sequence belongs to the universal ribosomal protein uS13 family. Part of the 30S ribosomal subunit. Forms a loose heterodimer with protein S19. Forms two bridges to the 50S subunit in the 70S ribosome.

Functionally, located at the top of the head of the 30S subunit, it contacts several helices of the 16S rRNA. In the 70S ribosome it contacts the 23S rRNA (bridge B1a) and protein L5 of the 50S subunit (bridge B1b), connecting the 2 subunits; these bridges are implicated in subunit movement. Contacts the tRNAs in the A and P-sites. This chain is Small ribosomal subunit protein uS13, found in Bifidobacterium longum subsp. infantis (strain ATCC 15697 / DSM 20088 / JCM 1222 / NCTC 11817 / S12).